We begin with the raw amino-acid sequence, 1103 residues long: Isoleucine--tRNA ligase (1103 aa).

Positions 53 to 63 match the 'HIGH' region motif; it reads PFANGLPHYGH. The 'KMSKS' region motif lies at 628–632; the sequence is KLSKR. Residue Lys-631 participates in ATP binding.

Belongs to the class-I aminoacyl-tRNA synthetase family. IleS type 2 subfamily. In terms of assembly, monomer. The cofactor is Zn(2+).

Its subcellular location is the cytoplasm. It carries out the reaction tRNA(Ile) + L-isoleucine + ATP = L-isoleucyl-tRNA(Ile) + AMP + diphosphate. Functionally, catalyzes the attachment of isoleucine to tRNA(Ile). As IleRS can inadvertently accommodate and process structurally similar amino acids such as valine, to avoid such errors it has two additional distinct tRNA(Ile)-dependent editing activities. One activity is designated as 'pretransfer' editing and involves the hydrolysis of activated Val-AMP. The other activity is designated 'posttransfer' editing and involves deacylation of mischarged Val-tRNA(Ile). The sequence is that of Isoleucine--tRNA ligase from Rickettsia akari (strain Hartford).